A 431-amino-acid chain; its full sequence is Probable carboxylic ester hydrolase LipM (431 aa).

The next 3 helical transmembrane spans lie at 7-27 (IHVI…AATI), 38-58 (FASL…LPTL), and 75-95 (PVRA…LNLS). Active-site residues include Ser-261, Asp-357, and His-390.

The protein belongs to the 'GDXG' lipolytic enzyme family.

It is found in the membrane. The chain is Probable carboxylic ester hydrolase LipM from Mycobacterium tuberculosis (strain ATCC 25618 / H37Rv).